Reading from the N-terminus, the 82-residue chain is Putative defensin-like protein 48 (82 aa).

The N-terminal stretch at 1–28 (MGIKTLIIFFHIFILAVLSSNNIILTSG) is a signal peptide. 4 cysteine pairs are disulfide-bonded: cysteine 39/cysteine 80, cysteine 43/cysteine 67, cysteine 53/cysteine 78, and cysteine 57/cysteine 79.

It belongs to the DEFL family.

The protein resides in the secreted. This chain is Putative defensin-like protein 48, found in Arabidopsis thaliana (Mouse-ear cress).